We begin with the raw amino-acid sequence, 427 residues long: Alpha/beta hydrolase gkaG (427 aa).

The active site involves D368.

This sequence belongs to the AB hydrolase superfamily. In terms of assembly, homodimer.

The protein operates within mycotoxin biosynthesis. In terms of biological role, alpha/beta hydrolase; part of the gene cluster that mediates the biosynthesis of GKK1032, fungal natural products containing a macrocyclic para-cyclophane connected to a decahydrofluorene ring system that show potent antitumor activities. Within the pathway, gkaG catalyzes the Knoevenagel condensation that affords the 3-pyrrolin-2-one ring, using as substrate the polyketide-tyrosyl acyl thioester product of gkaA. The pathway begins with the PKS-NRPS gkaA which, with the help of the trans-enoyl reductase gkaC, synthesizes the polyketide-tyrosyl acyl thioester product which can be reductively off-loaded by the terminal reductase (R) domain in gkaA. The alpha/beta hydrolase gkaG is then required to catalyze the subsequent Knoevenagel condensation that affords the 3-pyrrolin-2-one ring, whereas the three proteins gkaB, gkaX and gkaZ then function synergistically to form the cyclophane. The sequence is that of Alpha/beta hydrolase gkaG from Penicillium citrinum.